The chain runs to 1051 residues: Putative transcription factor SEF1 (1051 aa).

The segment covering 1-10 (MSTDVSERGA) has biased composition (basic and acidic residues). Disordered stretches follow at residues 1-54 (MSTD…SEES) and 67-90 (GQASPDRSKVSKQQNGASGHRPVT). Positions 11–21 (EAGSSSGLLSS) are enriched in low complexity. A DNA-binding region (zn(2)-C6 fungal-type) is located at residues 92–122 (CTHCRQHKIKCNASENFPSSCSRCERMGLQC). Positions 206-218 (SSVKSSVNTPSGS) are enriched in low complexity. Disordered stretches follow at residues 206–227 (SSVKSSVNTPSGSYSASAVDVS), 738–759 (EKNRKEQPVHTAATGSQDTEKR), and 927–968 (ASGN…QPAP).

It is found in the nucleus. Its function is as follows. Putative transcription factor. In Eremothecium gossypii (strain ATCC 10895 / CBS 109.51 / FGSC 9923 / NRRL Y-1056) (Yeast), this protein is Putative transcription factor SEF1 (SEF1).